A 94-amino-acid polypeptide reads, in one-letter code: Co-chaperonin GroES (94 aa).

This sequence belongs to the GroES chaperonin family. Heptamer of 7 subunits arranged in a ring. Interacts with the chaperonin GroEL.

Its subcellular location is the cytoplasm. Its function is as follows. Together with the chaperonin GroEL, plays an essential role in assisting protein folding. The GroEL-GroES system forms a nano-cage that allows encapsulation of the non-native substrate proteins and provides a physical environment optimized to promote and accelerate protein folding. GroES binds to the apical surface of the GroEL ring, thereby capping the opening of the GroEL channel. The sequence is that of Co-chaperonin GroES from Clostridium botulinum.